Here is a 125-residue protein sequence, read N- to C-terminus: Small ribosomal subunit protein eS8 (125 aa).

Residues Met-1–Arg-30 form a disordered region.

This sequence belongs to the eukaryotic ribosomal protein eS8 family. As to quaternary structure, part of the 30S ribosomal subunit.

This chain is Small ribosomal subunit protein eS8, found in Picrophilus torridus (strain ATCC 700027 / DSM 9790 / JCM 10055 / NBRC 100828 / KAW 2/3).